Reading from the N-terminus, the 274-residue chain is AA9 family lytic polysaccharide monooxygenase A (274 aa).

Positions 1–22 (MHVPQFISTGALLALLARPAAA) are cleaved as a signal peptide. Histidine 23 provides a ligand contact to Cu(2+). Cysteines 63 and 194 form a disulfide. Glycine 67, aspartate 98, and serine 100 together coordinate (1,4-beta-D-glucosyl)n. Histidine 101 provides a ligand contact to Cu(2+). An O2-binding site is contributed by histidine 174. Aspartate 177 is a (1,4-beta-D-glucosyl)n binding site. Tyrosine 191 is a binding site for Cu(2+).

It belongs to the polysaccharide monooxygenase AA9 family. It depends on Cu(2+) as a cofactor.

It is found in the secreted. The enzyme catalyses [(1-&gt;4)-beta-D-glucosyl]n+m + reduced acceptor + O2 = 4-dehydro-beta-D-glucosyl-[(1-&gt;4)-beta-D-glucosyl]n-1 + [(1-&gt;4)-beta-D-glucosyl]m + acceptor + H2O.. In terms of biological role, lytic polysaccharide monooxygenase (LPMO) that depolymerizes crystalline and amorphous polysaccharides via the oxidation of scissile alpha- or beta-(1-4)-glycosidic bonds, yielding C4 oxidation products. Catalysis by LPMOs requires the reduction of the active-site copper from Cu(II) to Cu(I) by a reducing agent and H(2)O(2) or O(2) as a cosubstrate. Cleaves a range of polysaccharides, including cellulose, xyloglucan, mixed-linkage glucan and glucomannan. The sequence is that of AA9 family lytic polysaccharide monooxygenase A from Collariella virescens (Soil fungus).